Reading from the N-terminus, the 105-residue chain is Thiosulfate sulfurtransferase GlpE (105 aa).

In terms of domain architecture, Rhodanese spans aspartate 16–glutamate 104. Cysteine 64 acts as the Cysteine persulfide intermediate in catalysis.

This sequence belongs to the GlpE family.

It localises to the cytoplasm. It catalyses the reaction thiosulfate + hydrogen cyanide = thiocyanate + sulfite + 2 H(+). The enzyme catalyses thiosulfate + [thioredoxin]-dithiol = [thioredoxin]-disulfide + hydrogen sulfide + sulfite + 2 H(+). In terms of biological role, transferase that catalyzes the transfer of sulfur from thiosulfate to thiophilic acceptors such as cyanide or dithiols. May function in a CysM-independent thiosulfate assimilation pathway by catalyzing the conversion of thiosulfate to sulfite, which can then be used for L-cysteine biosynthesis. The polypeptide is Thiosulfate sulfurtransferase GlpE (Pseudoalteromonas translucida (strain TAC 125)).